The following is a 400-amino-acid chain: MARINVVVSFLAALAVVQAAQLLNLDGQKDAVPGSYVVVMNDGLSGLDFESHVKSMAKVQKANALKRDFDNTADGVKFKYNINGWQAYSGKFDNKTIQSILDDPRVNYIEPQRTFRAFGWVTQDNAPSWGLGRISHTSRGRMDYVYDSSAGENVTVYSVDSGVDISHPEFEGRAIWGVNAADNSDVDQIGHGTHTSGTIAGKTYGVAKMAKIVAVKVLDAGGQGTNGGIIQGINWAVNHARQNNVTGKAVMNMSFGGGLSRAINEAASSAVRAGIFMVAAAGNNNEDARYTTPASARGVCAVGASTQNDLKARFSNWGPTLAVYAPGDRIWSAMPDGGRDVMRGTSMAAPHVAGVAAVLISSEKIGTDRLCERIKELSVSSIQSPGADTTDKLLYNGSGQ.

The N-terminal stretch at 1-19 is a signal peptide; the sequence is MARINVVVSFLAALAVVQA. The propeptide occupies 20–118; that stretch reads AQLLNLDGQK…IEPQRTFRAF (99 aa). The 82-residue stretch at 35-116 folds into the Inhibitor I9 domain; it reads SYVVVMNDGL…NYIEPQRTFR (82 aa). The Peptidase S8 domain occupies 128–400; sequence SWGLGRISHT…DKLLYNGSGQ (273 aa). An N-linked (GlcNAc...) asparagine glycan is attached at Asn-153. Active-site charge relay system residues include Asp-160 and His-191. 2 N-linked (GlcNAc...) asparagine glycosylation sites follow: Asn-244 and Asn-252. Ser-346 serves as the catalytic Charge relay system. N-linked (GlcNAc...) asparagine glycosylation is present at Asn-396.

Belongs to the peptidase S8 family.

Its subcellular location is the secreted. Secreted subtilisin-like serine protease with keratinolytic activity that contributes to pathogenicity. This chain is Subtilisin-like protease CPC735_047380, found in Coccidioides posadasii (strain C735) (Valley fever fungus).